Consider the following 522-residue polypeptide: Flavin-dependent halogenase armH1 (522 aa).

FAD-binding residues include G16, A19, and E49. The chloride site is built by S328 and G329. Residue I330 participates in FAD binding.

It belongs to the flavin-dependent halogenase family.

It carries out the reaction melleolide F + FADH2 + chloride + O2 = 6'-chloromelleolide F + FAD + 2 H2O + H(+). In terms of biological role, flavin-dependent halogenase involved in the biosynthesis of melleolides, a range of antifungal and phytotoxic polyketide derivatives composed of an orsellinic acid (OA) moiety esterified to various sesquiterpene alcohols. The halogenase catalyzes the transfer of a single chlorine atom to the melleolide backbone, resulting in a 6'-chloromelleolide product. The enzyme acts on free substrate and does not depend on carrier-protein-dependent acceptor molecules. This Armillaria mellea (Honey mushroom) protein is Flavin-dependent halogenase armH1.